Consider the following 196-residue polypeptide: Lipoprotein signal peptidase (196 aa).

The next 2 helical transmembrane spans lie at 75–95 and 97–117; these read IVFLITNTIIVCYLYYLMMSS and TIGGFAGYSFVIGGAIGNLID. Residues Asp-126 and Asp-144 contribute to the active site. A helical membrane pass occupies residues 135-155; sequence YSFPVFNLADCFITLGVIILV.

The protein belongs to the peptidase A8 family.

The protein localises to the cell inner membrane. The enzyme catalyses Release of signal peptides from bacterial membrane prolipoproteins. Hydrolyzes -Xaa-Yaa-Zaa-|-(S,diacylglyceryl)Cys-, in which Xaa is hydrophobic (preferably Leu), and Yaa (Ala or Ser) and Zaa (Gly or Ala) have small, neutral side chains.. The protein operates within protein modification; lipoprotein biosynthesis (signal peptide cleavage). This protein specifically catalyzes the removal of signal peptides from prolipoproteins. This Rickettsia bellii (strain OSU 85-389) protein is Lipoprotein signal peptidase.